We begin with the raw amino-acid sequence, 527 residues long: Putative adhesin P1-like protein MPN_500 (527 aa).

Disordered stretches follow at residues 1–26 (MDDI…GSRS), 76–148 (GWRN…LTNY), 248–269 (ASGS…PEQS), and 468–527 (FGTD…VSGH). Residues 9–26 (TSAGSSSGTSTNTSGSRS) are compositionally biased toward low complexity. The span at 82–95 (TTSGSTGNANDTKF) shows a compositional bias: polar residues. A compositionally biased stretch (low complexity) spans 108–117 (SSGTNTSAGN). Residues 128–148 (QNGQVKTSVQEATSGDNLTNY) are compositionally biased toward polar residues. The span at 248-262 (ASGSGSNTTSSPGIG) shows a compositional bias: low complexity. Over residues 468–495 (FGTDHSTQPQPQSLKTTTPVFGRSSGNL) the composition is skewed to polar residues. Positions 500-513 (SGGGAGGGSSGSGQ) are enriched in gly residues.

This sequence belongs to the adhesin P1 family.

The polypeptide is Putative adhesin P1-like protein MPN_500 (Mycoplasma pneumoniae (strain ATCC 29342 / M129 / Subtype 1) (Mycoplasmoides pneumoniae)).